A 30-amino-acid chain; its full sequence is Trypsin inhibitor 3 (30 aa).

Intrachain disulfides connect Cys4/Cys21, Cys11/Cys23, and Cys17/Cys29.

This sequence belongs to the protease inhibitor I7 (squash-type serine protease inhibitor) family.

It localises to the secreted. In terms of biological role, inhibits trypsin. The protein is Trypsin inhibitor 3 of Momordica charantia (Bitter gourd).